A 115-amino-acid polypeptide reads, in one-letter code: uncharacterized protein (115 aa).

An N-terminal signal peptide occupies residues 1–24; that stretch reads MLPLCLTFLSFFLSLGGSFKAVMT. The next 2 membrane-spanning stretches (helical) occupy residues 39-59 and 93-113; these read FWIF…ALAI and YLTS…FLLS.

Its subcellular location is the membrane. This is an uncharacterized protein from Saccharomyces cerevisiae (strain ATCC 204508 / S288c) (Baker's yeast).